The chain runs to 439 residues: Signal recognition particle 54 kDa protein (439 aa).

Residues 104-111, 184-188, and 242-245 each bind GTP; these read GLQGSGKT, DTAGR, and SKLD.

Belongs to the GTP-binding SRP family. SRP54 subfamily. As to quaternary structure, part of the signal recognition particle protein translocation system, which is composed of SRP and FtsY. Archaeal SRP consists of a 7S RNA molecule of 300 nucleotides and two protein subunits: SRP54 and SRP19.

Its subcellular location is the cytoplasm. It carries out the reaction GTP + H2O = GDP + phosphate + H(+). Involved in targeting and insertion of nascent membrane proteins into the cytoplasmic membrane. Binds to the hydrophobic signal sequence of the ribosome-nascent chain (RNC) as it emerges from the ribosomes. The SRP-RNC complex is then targeted to the cytoplasmic membrane where it interacts with the SRP receptor FtsY. This chain is Signal recognition particle 54 kDa protein, found in Methanococcoides burtonii (strain DSM 6242 / NBRC 107633 / OCM 468 / ACE-M).